Consider the following 190-residue polypeptide: MNNNLPTGSSAAVVDLLNKENVIAYPTEAVFGVGCDPDSETAVTRLLALKQRPVDKGLILIAASFEQLKPYIDDSILTAAQRKAVFDCWPGPVTFVFPAPATTPRWLTGRFDSLAVRVTNHPLVVALCNAYGKPLVSTSANLSGLPPCRTVEEVRAQFGDDFPVVEGATGGRLNPSEIRDALTGELFRQG.

A YrdC-like domain is found at 7–190 (TGSSAAVVDL…ALTGELFRQG (184 aa)).

Belongs to the SUA5 family. TsaC subfamily.

Its subcellular location is the cytoplasm. It carries out the reaction L-threonine + hydrogencarbonate + ATP = L-threonylcarbamoyladenylate + diphosphate + H2O. In terms of biological role, required for the formation of a threonylcarbamoyl group on adenosine at position 37 (t(6)A37) in tRNAs that read codons beginning with adenine. Catalyzes the conversion of L-threonine, HCO(3)(-)/CO(2) and ATP to give threonylcarbamoyl-AMP (TC-AMP) as the acyladenylate intermediate, with the release of diphosphate. This chain is Threonylcarbamoyl-AMP synthase, found in Salmonella typhi.